A 268-amino-acid chain; its full sequence is HTH-type transcriptional activator RhaS (268 aa).

The 98-residue stretch at 171–268 (RQMIRWLENN…YSIAPRELRI (98 aa)) folds into the HTH araC/xylS-type domain. 2 consecutive DNA-binding regions (H-T-H motif) follow at residues 188–209 (EELAEKFALPIRTLHRYIKSQT) and 236–259 (IINIAYDCGFNDSSYFSTCFKNEY).

Binds DNA as a dimer.

It localises to the cytoplasm. Functionally, activates expression of the rhaBAD and rhaT operons. This chain is HTH-type transcriptional activator RhaS, found in Mannheimia succiniciproducens (strain KCTC 0769BP / MBEL55E).